A 437-amino-acid chain; its full sequence is Putative metabolite transport protein NicT (437 aa).

A run of 12 helical transmembrane segments spans residues 28 to 48 (LIPF…NVGF), 66 to 86 (LGAG…NLIL), 93 to 113 (LWIA…MFVT), 123 to 143 (FLLG…LTMW), 152 to 172 (IIAL…PISG), 189 to 209 (WLFL…FWAL), 254 to 274 (VWML…MGFW), 290 to 310 (IGLL…MIGA), 320 to 340 (WHII…TLFS), 347 to 367 (VVLF…FFSL), 374 to 394 (GTAA…AGLV), and 411 to 431 (AALW…IALP).

Belongs to the major facilitator superfamily.

The protein localises to the membrane. Probable transporter, possibly involved in the aerobic nicotinate degradation pathway. In Pseudomonas putida (strain ATCC 47054 / DSM 6125 / CFBP 8728 / NCIMB 11950 / KT2440), this protein is Putative metabolite transport protein NicT (nicT).